We begin with the raw amino-acid sequence, 245 residues long: MLLIPAIDLKEGRCVRLRQGLMEEATVFSDSPAETALHWFKQGARRLHLVDLNGAFAGVPQNLPAIKDILAAVAKDIPVQLGGGIRDLKTIGQYLDLGLNDVIIGTAAVKNPDFVREACKAFPGRIIVGLDAKDGMAAIDGWATVTGHHVIDLAKRFEDDGVNSIIYTDIGRDGMMSGVNIDATVKLAQAVRIPVIASGGLTGLDDIRALCAAEKHGVAGAITGRAIYEGSIDFAQAQQLADSLD.

Asp8 functions as the Proton acceptor in the catalytic mechanism. The active-site Proton donor is Asp131.

It belongs to the HisA/HisF family.

It is found in the cytoplasm. The catalysed reaction is 1-(5-phospho-beta-D-ribosyl)-5-[(5-phospho-beta-D-ribosylamino)methylideneamino]imidazole-4-carboxamide = 5-[(5-phospho-1-deoxy-D-ribulos-1-ylimino)methylamino]-1-(5-phospho-beta-D-ribosyl)imidazole-4-carboxamide. Its pathway is amino-acid biosynthesis; L-histidine biosynthesis; L-histidine from 5-phospho-alpha-D-ribose 1-diphosphate: step 4/9. The sequence is that of 1-(5-phosphoribosyl)-5-[(5-phosphoribosylamino)methylideneamino] imidazole-4-carboxamide isomerase from Neisseria meningitidis serogroup C (strain 053442).